The following is a 271-amino-acid chain: Phosphate import ATP-binding protein PstB (271 aa).

The 243-residue stretch at 24–266 (MIGKDVSVYY…PDDQRTQDYI (243 aa)) folds into the ABC transporter domain. Residue 56–63 (GPSGCGKS) participates in ATP binding.

This sequence belongs to the ABC transporter superfamily. Phosphate importer (TC 3.A.1.7) family. The complex is composed of two ATP-binding proteins (PstB), two transmembrane proteins (PstC and PstA) and a solute-binding protein (PstS).

Its subcellular location is the cell inner membrane. It catalyses the reaction phosphate(out) + ATP + H2O = ADP + 2 phosphate(in) + H(+). Its function is as follows. Part of the ABC transporter complex PstSACB involved in phosphate import. Responsible for energy coupling to the transport system. The sequence is that of Phosphate import ATP-binding protein PstB from Agrobacterium fabrum (strain C58 / ATCC 33970) (Agrobacterium tumefaciens (strain C58)).